The sequence spans 182 residues: ATP synthase subunit delta (182 aa).

This sequence belongs to the ATPase delta chain family. F-type ATPases have 2 components, F(1) - the catalytic core - and F(0) - the membrane proton channel. F(1) has five subunits: alpha(3), beta(3), gamma(1), delta(1), epsilon(1). CF(0) has four main subunits: a(1), b(1), b'(1) and c(10-14). The alpha and beta chains form an alternating ring which encloses part of the gamma chain. F(1) is attached to F(0) by a central stalk formed by the gamma and epsilon chains, while a peripheral stalk is formed by the delta, b and b' chains.

Its subcellular location is the cellular thylakoid membrane. Its function is as follows. F(1)F(0) ATP synthase produces ATP from ADP in the presence of a proton or sodium gradient. F-type ATPases consist of two structural domains, F(1) containing the extramembraneous catalytic core and F(0) containing the membrane proton channel, linked together by a central stalk and a peripheral stalk. During catalysis, ATP synthesis in the catalytic domain of F(1) is coupled via a rotary mechanism of the central stalk subunits to proton translocation. Functionally, this protein is part of the stalk that links CF(0) to CF(1). It either transmits conformational changes from CF(0) to CF(1) or is implicated in proton conduction. In Synechococcus sp. (strain CC9902), this protein is ATP synthase subunit delta.